The primary structure comprises 497 residues: Endoglucanase 17 (497 aa).

The N-terminal stretch at 1–21 (MAAAGGAVLLLVLATATSVTG) is a signal peptide. Asp77 (nucleophile) is an active-site residue. Residue His406 is part of the active site. Asn451 is a glycosylation site (N-linked (GlcNAc...) asparagine). Catalysis depends on residues Asp458 and Glu467.

Belongs to the glycosyl hydrolase 9 (cellulase E) family.

Its subcellular location is the secreted. The catalysed reaction is Endohydrolysis of (1-&gt;4)-beta-D-glucosidic linkages in cellulose, lichenin and cereal beta-D-glucans.. This chain is Endoglucanase 17 (GLU13), found in Oryza sativa subsp. japonica (Rice).